Consider the following 51-residue polypeptide: EAETATKSCSGRQANQVSLPKQPASQPRGDPTGPKESKKKVETETETDPVN.

Positions 1–25 are enriched in polar residues; it reads EAETATKSCSGRQANQVSLPKQPAS. Residues 1–51 form a disordered region; sequence EAETATKSCSGRQANQVSLPKQPASQPRGDPTGPKESKKKVETETETDPVN. Lys21 is covalently cross-linked (Glycyl lysine isopeptide (Lys-Gly) (interchain with G-Cter in ubiquitin)). The Cell attachment site signature appears at 28–30; that stretch reads RGD. Residues 33–43 show a composition bias toward basic and acidic residues; that stretch reads GPKESKKKVET.

It belongs to the lentiviruses Tat family. In terms of assembly, interacts with host CCNT1. Associates with the P-TEFb complex composed at least of Tat, P-TEFb (CDK9 and CCNT1), TAR RNA, RNA Pol II. Recruits the HATs CREBBP, TAF1/TFIID, EP300, PCAF and GCN5L2. Interacts with host KAT5/Tip60; this interaction targets the latter to degradation. Interacts with the host deacetylase SIRT1. Interacts with host capping enzyme RNGTT; this interaction stimulates RNGTT. Binds to host KDR, and to the host integrins ITGAV/ITGB3 and ITGA5/ITGB1. Interacts with host KPNB1/importin beta-1 without previous binding to KPNA1/importin alpha-1. Interacts with EIF2AK2. Interacts with host nucleosome assembly protein NAP1L1; this interaction may be required for the transport of Tat within the nucleus, since the two proteins interact at the nuclear rim. Interacts with host C1QBP/SF2P32; this interaction involves lysine-acetylated Tat. Interacts with the host chemokine receptors CCR2, CCR3 and CXCR4. Interacts with host DPP4/CD26; this interaction may trigger an anti-proliferative effect. Interacts with host LDLR. Interacts with the host extracellular matrix metalloproteinase MMP1. Interacts with host PRMT6; this interaction mediates Tat's methylation. Interacts with, and is ubiquitinated by MDM2/Hdm2. Interacts with host PSMC3 and HTATIP2. Interacts with STAB1; this interaction may overcome SATB1-mediated repression of IL2 and IL2RA (interleukin) in T cells by binding to the same domain than HDAC1. Interacts (when acetylated) with human CDK13, thereby increasing HIV-1 mRNA splicing and promoting the production of the doubly spliced HIV-1 protein Nef. Post-translationally, acetylation by EP300, CREBBP, GCN5L2/GCN5 and PCAF regulates the transactivation activity of Tat. In terms of processing, phosphorylated by EIF2AK2 on serine and threonine residues adjacent to the basic region important for TAR RNA binding and function. Phosphorylation of Tat by EIF2AK2 is dependent on the prior activation of EIF2AK2 by dsRNA. Asymmetrical arginine methylation by host PRMT6 seems to diminish the transactivation capacity of Tat and affects the interaction with host CCNT1. Post-translationally, polyubiquitination by MDM2 does not target Tat to degradation, but activates its transactivation function and fosters interaction with CCNT1 and TAR RNA.

The protein resides in the host nucleus. It localises to the host nucleolus. It is found in the host cytoplasm. Its subcellular location is the secreted. Its function is as follows. Transcriptional activator that increases RNA Pol II processivity, thereby increasing the level of full-length viral transcripts. Recognizes a hairpin structure at the 5'-LTR of the nascent viral mRNAs referred to as the transactivation responsive RNA element (TAR) and recruits the cyclin T1-CDK9 complex (P-TEFb complex) that will in turn hyperphosphorylate the RNA polymerase II to allow efficient elongation. The CDK9 component of P-TEFb and other Tat-activated kinases hyperphosphorylate the C-terminus of RNA Pol II that becomes stabilized and much more processive. Other factors such as HTATSF1/Tat-SF1, SUPT5H/SPT5, and HTATIP2 are also important for Tat's function. Besides its effect on RNA Pol II processivity, Tat induces chromatin remodeling of proviral genes by recruiting the histone acetyltransferases (HATs) CREBBP, EP300 and PCAF to the chromatin. This also contributes to the increase in proviral transcription rate, especially when the provirus integrates in transcriptionally silent region of the host genome. To ensure maximal activation of the LTR, Tat mediates nuclear translocation of NF-kappa-B by interacting with host RELA. Through its interaction with host TBP, Tat may also modulate transcription initiation. Tat can reactivate a latently infected cell by penetrating in it and transactivating its LTR promoter. In the cytoplasm, Tat is thought to act as a translational activator of HIV-1 mRNAs. Functionally, extracellular circulating Tat can be endocytosed by surrounding uninfected cells via the binding to several surface receptors such as CD26, CXCR4, heparan sulfate proteoglycans (HSPG) or LDLR. Neurons are rarely infected, but they internalize Tat via their LDLR. Endosomal low pH allows Tat to cross the endosome membrane to enter the cytosol and eventually further translocate into the nucleus, thereby inducing severe cell dysfunctions ranging from cell activation to cell death. Through its interaction with nuclear HATs, Tat is potentially able to control the acetylation-dependent cellular gene expression. Tat seems to inhibit the HAT activity of KAT5/Tip60 and TAF1, and consequently modify the expression of specific cellular genes. Modulates the expression of many cellular genes involved in cell survival, proliferation or in coding for cytokines (such as IL10) or cytokine receptors. May be involved in the derepression of host interleukin IL2 expression. Mediates the activation of cyclin-dependent kinases and dysregulation of microtubule network. Tat plays a role in T-cell and neurons apoptosis. Tat induced neurotoxicity and apoptosis probably contribute to neuroAIDS. Host extracellular matrix metalloproteinase MMP1 cleaves Tat and decreases Tat's mediated neurotoxicity. Circulating Tat also acts as a chemokine-like and/or growth factor-like molecule that binds to specific receptors on the surface of the cells, affecting many cellular pathways. In the vascular system, Tat binds to ITGAV/ITGB3 and ITGA5/ITGB1 integrins dimers at the surface of endothelial cells and competes with bFGF for heparin-binding sites, leading to an excess of soluble bFGF. Binds to KDR/VEGFR-2. All these Tat-mediated effects enhance angiogenesis in Kaposi's sarcoma lesions. The chain is Protein Tat from Homo sapiens (Human).